The chain runs to 341 residues: Protein CbhE (341 aa).

Acidic residues predominate over residues 287 to 297 (IDEENTSDSSE). The disordered stretch occupies residues 287-341 (IDEENTSDSSEEGTSKNRFRDTLFSNVPDSSSDSENEQEREKKELAGKTPSFRLC). Over residues 323–332 (EQEREKKELA) the composition is skewed to basic and acidic residues.

Its subcellular location is the cytoplasm. Functionally, may be involved in the pathogenesis of acute Q fever. In Coxiella burnetii (strain RSA 493 / Nine Mile phase I), this protein is Protein CbhE (cbhE).